The chain runs to 456 residues: Argininosuccinate lyase (456 aa).

It belongs to the lyase 1 family. Argininosuccinate lyase subfamily.

The protein resides in the cytoplasm. It catalyses the reaction 2-(N(omega)-L-arginino)succinate = fumarate + L-arginine. The protein operates within amino-acid biosynthesis; L-arginine biosynthesis; L-arginine from L-ornithine and carbamoyl phosphate: step 3/3. This chain is Argininosuccinate lyase, found in Listeria monocytogenes serotype 4b (strain F2365).